A 156-amino-acid polypeptide reads, in one-letter code: Transcription antitermination protein NusB (156 aa).

It belongs to the NusB family.

Involved in transcription antitermination. Required for transcription of ribosomal RNA (rRNA) genes. Binds specifically to the boxA antiterminator sequence of the ribosomal RNA (rrn) operons. This Bartonella tribocorum (strain CIP 105476 / IBS 506) protein is Transcription antitermination protein NusB.